The sequence spans 605 residues: Threonine--tRNA ligase (605 aa).

The segment at 195–497 (DHRKVGKELG…LIEEYAGDFP (303 aa)) is catalytic. Residues C294, H345, and H474 each contribute to the Zn(2+) site.

This sequence belongs to the class-II aminoacyl-tRNA synthetase family. As to quaternary structure, homodimer. The cofactor is Zn(2+).

The protein resides in the cytoplasm. It carries out the reaction tRNA(Thr) + L-threonine + ATP = L-threonyl-tRNA(Thr) + AMP + diphosphate + H(+). In terms of biological role, catalyzes the attachment of threonine to tRNA(Thr) in a two-step reaction: L-threonine is first activated by ATP to form Thr-AMP and then transferred to the acceptor end of tRNA(Thr). Also edits incorrectly charged L-seryl-tRNA(Thr). This is Threonine--tRNA ligase from Thermosynechococcus vestitus (strain NIES-2133 / IAM M-273 / BP-1).